The sequence spans 268 residues: Fibroblast growth factor 8 (268 aa).

Positions 1 to 22 (MGSPRSALSCLLLHLLVLCLQA) are cleaved as a signal peptide. Q23 is subject to Pyrrolidone carboxylic acid. Residues 29–87 (QKRGPGAGNPADTLGQGHEDRPFGQRSRAGKNFTNPAPNYPEEGSKEQRDSVLPKVTQR) are disordered. N60 carries N-linked (GlcNAc...) asparagine glycosylation. Basic and acidic residues predominate over residues 71–80 (EGSKEQRDSV). Residue N190 is glycosylated (N-linked (GlcNAc...) asparagine).

This sequence belongs to the heparin-binding growth factors family. Monomer. Homodimer. Interacts with FGFR1, FGFR2, FGFR3 and FGFR4. Affinity between fibroblast growth factors (FGFs) and their receptors is increased by heparan sulfate glycosaminoglycans that function as coreceptors. In terms of processing, the N-terminus is blocked. In terms of tissue distribution, absent in normal mammary glands and detected only in adult testis and ovary and in midgestational embryos.

Its subcellular location is the secreted. Plays an important role in the regulation of embryonic development, cell proliferation, cell differentiation and cell migration. Required for normal brain, eye, ear and limb development during embryogenesis. Required for normal development of the gonadotropin-releasing hormone (GnRH) neuronal system. Plays a role in neurite outgrowth in hippocampal cells. Cooperates with Wnt-1 in mouse mammary tumor virus-induced murine mammary tumorigenesis. The polypeptide is Fibroblast growth factor 8 (Fgf8) (Mus musculus (Mouse)).